The sequence spans 272 residues: uncharacterized protein (272 aa).

The signal sequence occupies residues 1 to 20; that stretch reads MMEPKSIFLLGLLLFRVGKL.

This is an uncharacterized protein from Caenorhabditis elegans.